Consider the following 229-residue polypeptide: Protein FMP52-2, mitochondrial (229 aa).

The N-terminal 45 residues, 1 to 45, are a transit peptide targeting the mitochondrion; that stretch reads MAAGAFILGSTGLCGYQMLRFAEKSSLFDKISTVGRKLPDFKSEK.

This sequence belongs to the FMP52 family.

It localises to the mitochondrion outer membrane. The protein is Protein FMP52-2, mitochondrial (FMP522) of Scheffersomyces stipitis (strain ATCC 58785 / CBS 6054 / NBRC 10063 / NRRL Y-11545) (Yeast).